We begin with the raw amino-acid sequence, 287 residues long: Thiazole synthase (287 aa).

The active-site Schiff-base intermediate with DXP is K111. Residues G172, 203–204 (AG), and 225–226 (NT) each bind 1-deoxy-D-xylulose 5-phosphate. Residues 268 to 287 (PQEGVISTRPYGSQADEIGS) are disordered.

It belongs to the ThiG family. As to quaternary structure, homotetramer. Forms heterodimers with either ThiH or ThiS.

It is found in the cytoplasm. The enzyme catalyses [ThiS sulfur-carrier protein]-C-terminal-Gly-aminoethanethioate + 2-iminoacetate + 1-deoxy-D-xylulose 5-phosphate = [ThiS sulfur-carrier protein]-C-terminal Gly-Gly + 2-[(2R,5Z)-2-carboxy-4-methylthiazol-5(2H)-ylidene]ethyl phosphate + 2 H2O + H(+). It participates in cofactor biosynthesis; thiamine diphosphate biosynthesis. Functionally, catalyzes the rearrangement of 1-deoxy-D-xylulose 5-phosphate (DXP) to produce the thiazole phosphate moiety of thiamine. Sulfur is provided by the thiocarboxylate moiety of the carrier protein ThiS. In vitro, sulfur can be provided by H(2)S. The chain is Thiazole synthase from Rhodopirellula baltica (strain DSM 10527 / NCIMB 13988 / SH1).